The primary structure comprises 98 residues: PE family immunomodulator PE35 (98 aa).

The 90-residue stretch at 1–90 folds into the PE domain; that stretch reads MEKMSHDPIA…DVARTYSQID (90 aa).

The protein belongs to the mycobacterial PE family. In terms of assembly, interacts with PPE68. PE35/PPE68 complex interacts with human TLR2.

It localises to the secreted. Its subcellular location is the cell surface. Functionally, plays a major role in RD1-associated pathogenesis, and may contribute to the establishment and maintenance of M.tuberculosis infection. Together with PPE68, stimulates the secretion of IL-10 and MCP-1 from human macrophages, via the interaction with human Toll-like receptor 2 (TLR2). This chain is PE family immunomodulator PE35 (PE35), found in Mycobacterium tuberculosis (strain CDC 1551 / Oshkosh).